The chain runs to 211 residues: Probable nicotinate-nucleotide adenylyltransferase (211 aa).

This sequence belongs to the NadD family.

The catalysed reaction is nicotinate beta-D-ribonucleotide + ATP + H(+) = deamido-NAD(+) + diphosphate. Its pathway is cofactor biosynthesis; NAD(+) biosynthesis; deamido-NAD(+) from nicotinate D-ribonucleotide: step 1/1. Functionally, catalyzes the reversible adenylation of nicotinate mononucleotide (NaMN) to nicotinic acid adenine dinucleotide (NaAD). This Desulfotalea psychrophila (strain LSv54 / DSM 12343) protein is Probable nicotinate-nucleotide adenylyltransferase.